Reading from the N-terminus, the 911-residue chain is MATPSMLPQWSYMHIAGQDASEYLSPGLVQFAQATESYFNIGNKFRNPTVAPTHDVTTERSQRLQLRFVPVDREDTQYSYKTRFQLAVGDNRVLDMASTYFDIRGTLDRGASFKPYSGTAYNSFAPKSAPNNTQFRQANNGHPAQTIAQASYVATIGGANNDLQMGVDERQLPVYANTTYQPEPQLGIEGWTAGSMAVIDQAGGRVLRNPTQTPCYGSYAKPTNEHGGITKANTQVEKKYYRTGDNGNPETVFYTEEADVLTPDTHLVHAVPAADRAKVEGLSQHAAPNRPNFIGFRDCFVGLMYYNSGGNLGVLAGQSSQLNAVVDLQDRNTELSYQMLLANTTDRSRYFSMWNQAMDSYDPEVRVIDNVGVEDEMPNYCFPLSGVQIGNRSHEVQRNQQQWQNVANSDNNYIGKGNLPAMEINLAANLWRSFLYSNVALYLPDNLKFTPHNIQLPPNTNTYEYMNGRIPVSGLIDTYVNIGTRWSPDVMDNVNPFNHHRNSGLRYRSQLLGNGRFCDFHIQVPQKFFAIRNLLLLPGTYTYEWSFRKDVNMILQSTLGNDLRVDGATVNITSVNLYASFFPMSHNTASTLEAMLRNDTNDQSFNDYLSAANMLYPIPPNATQLPIPSRNWAAFRGWSLTRLKQRETPALGSPFDPYFTYSGTIPYLDGTFYLSHTFRKVAIQFDSSVTWPGNDRLLTPNEFEIKISVDGEGYNVAQSNMTKDWFLVQMLANYNIGYQGYHLPPDYKDRTFSFLHNFIPMCRQVPNPATEGYFGLGIVNHRTTPAYWFRFCRAPREGHPYPQLALPPHWDPRHALRDPERKFLCDRTLWRIPFSSNFMSMGSLTDLGQNLLYANAAHALDMTFEMDPINEPTLLYVLFEVFDVARVHQPHRGVIEVVYLRTPFSAGNATT.

An N-acetylalanine; by host modification is found at alanine 2. Tyrosine 899 is modified (phosphotyrosine; by host).

The protein belongs to the adenoviridae hexon protein family. In terms of assembly, homotrimer. Interacts with the capsid vertex protein; this interaction binds the peripentonal hexons to the neighboring penton base. Interacts with the hexon-linking protein; this interaction tethers the hexons surrounding the penton to those situated in the central plate of the facet. Interacts with the hexon-interlacing protein; this interaction lashes the hexons together. Interacts with host dyneins DYNC1LI1 and DYNC1I2; this interaction might be involved in intracellular microtubule-dependent transport of incoming viral capsid. Interacts with the shutoff protein; this interaction allows folding and formation of hexons trimers. Interacts with pre-protein VI; this interaction probably allows nuclear import of hexon trimers and possibly pre-capsid assembly.

The protein resides in the virion. Its subcellular location is the host nucleus. Its function is as follows. Major capsid protein that self-associates to form 240 hexon trimers, each in the shape of a hexagon, building most of the pseudo T=25 capsid. Assembled into trimeric units with the help of the chaperone shutoff protein. Transported by pre-protein VI to the nucleus where it associates with other structural proteins to form an empty capsid. Might be involved, through its interaction with host dyneins, in the intracellular microtubule-dependent transport of incoming viral capsid to the nucleus. The sequence is that of Hexon protein from Bos taurus (Bovine).